We begin with the raw amino-acid sequence, 6713 residues long: Extracellular matrix-binding protein EbhA (6713 aa).

FIVAR domains lie at 1 to 58 (MGNL…VEQA), 126 to 184 (AMGQ…VTAA), 252 to 310 (AMKG…ITQA), 378 to 436 (QMGN…VEAA), 504 to 562 (AMAN…VENA), 630 to 688 (AMGT…INQI), 756 to 814 (AMGQ…VDRA), 882 to 940 (AMNS…VDNA), 1008 to 1066 (AMGA…INDM), 1134 to 1192 (AMTA…VNSA), 1260 to 1318 (AMKG…ITQA), 1386 to 1444 (AMHS…VEQA), 1512 to 1570 (AMGQ…VERA), 1638 to 1696 (AMTA…VTNA), 1764 to 1822 (AMKG…INQA), 1890 to 1948 (AMTN…VETA), 2142 to 2200 (AMNQ…INQK), 2268 to 2325 (AMGN…VQAA), 2393 to 2451 (AMGQ…VEAA), 2519 to 2577 (AMQR…VEQA), 2645 to 2703 (AMDQ…VTAA), 2771 to 2829 (AMNQ…VTQA), 2897 to 2955 (AMER…VEAA), 3023 to 3081 (AMGN…VEAA), 3149 to 3207 (AMDK…INQA), 3275 to 3333 (AMGN…VEQA), 3401 to 3459 (AMTQ…ITAA), 3527 to 3585 (AMTQ…IQQA), 3653 to 3711 (AMTN…VEQA), 3779 to 3837 (AMTQ…VAQA), 3905 to 3963 (AMGT…VTKA), 4031 to 4089 (AMGN…ITRA), 4157 to 4218 (AMDQ…ITNE), 4283 to 4341 (AMEL…VNGA), 4409 to 4467 (AMGN…VEQA), 4535 to 4592 (AMHG…INQV), 4660 to 4718 (LMDA…VSSA), 4786 to 4844 (AMKA…IDQA), 4912 to 4970 (AMEA…VEQL), 5038 to 5096 (AMQA…VEQL), 5164 to 5222 (AMET…VEQA), 5290 to 5344 (SMDQ…VDQA), 5412 to 5471 (AMDQ…VIKL), and 5666 to 5722 (AMET…INGA). Residues 6518 to 6540 (VIKNAIGVVGISGLLASFWFFIA) form a helical membrane-spanning segment. The disordered stretch occupies residues 6616–6713 (RRKEDEEDVE…KKKKSKKNKK (98 aa)). Basic and acidic residues-rich tracts occupy residues 6631–6641 (TDEKVLKDNEH) and 6680–6690 (QKDNQSKDKKS). Residues 6695 to 6713 (TSKKVAAKKKKKKSKKNKK) are compositionally biased toward basic residues.

The protein localises to the cell membrane. This is Extracellular matrix-binding protein EbhA (ebhA) from Staphylococcus aureus (strain Mu3 / ATCC 700698).